The sequence spans 274 residues: MSAAIEKETGMLDVGKHCAYCRQLDFLPFHCSFCNEDFCSNHRLKEDHHCRWLLEHEEVHKTEKSPSKSRDGSSSNDEAYFKSLLPERASVRIQRVSETREPLRGSNTAKVSSTLNSKTLDKIFKFFQRNEKRKSNNKSKKNFGSSSNKIIQLANLKKIAKGDPKIPMQNRIYIWCYLVDGDETDIAKEDTRMPLYINKMWPVGRAMDYLSIQLNVKSSTLTNSSSNDKFQLCKLKEGKQVSFYNIGASLRVTNEIKDLDTLYLVHNNADEKSN.

The AN1-type zinc finger occupies 12-58 (LDVGKHCAYCRQLDFLPFHCSFCNEDFCSNHRLKEDHHCRWLLEHEE). Residues Cys-18, Cys-21, Cys-31, Cys-34, Cys-39, His-42, His-48, and Cys-50 each coordinate Zn(2+). The segment at 170–266 (NRIYIWCYLV…KDLDTLYLVH (97 aa)) is ubiquitin-like. Residue Ser-273 is modified to Phosphoserine.

Interacts (via its ubiquitin-like domain) with CDC48 (via N-terminus). Associates with the 26S proteasome. Specifically interacts with the regulatory particle (RP) subunit RPN2. Exposure to arsenite, a known inducer of protein misfolding resulting in accumulation of polyubiquitinated conjugates, enhances the association with the proteoasome. Binds to ubiquitinated proteins conjugated to a 4 or more molecule ubiquitin chain. Binding to ubiquitinated proteins is zinc-dependent.

Its subcellular location is the cytoplasm. It is found in the nucleus. Promotes efficient arsenite-induced clearance of stress granules (SGs). May have a role in the ubiquitin-proteasome system (UPS) protecting cells from metalloid-induced proteotoxicity. This Saccharomyces cerevisiae (strain ATCC 204508 / S288c) (Baker's yeast) protein is CDC48-associated ubiquitin-like/zinc finger protein 1.